A 329-amino-acid polypeptide reads, in one-letter code: DNA-directed RNA polymerase subunit alpha (329 aa).

Positions 1–235 (MQGSVTEFLK…EQLEAFVDLR (235 aa)) are alpha N-terminal domain (alpha-NTD). The interval 249–329 (FDPILLRPVD…NWPPASIADE (81 aa)) is alpha C-terminal domain (alpha-CTD).

The protein belongs to the RNA polymerase alpha chain family. Homodimer. The RNAP catalytic core consists of 2 alpha, 1 beta, 1 beta' and 1 omega subunit. When a sigma factor is associated with the core the holoenzyme is formed, which can initiate transcription.

It catalyses the reaction RNA(n) + a ribonucleoside 5'-triphosphate = RNA(n+1) + diphosphate. Functionally, DNA-dependent RNA polymerase catalyzes the transcription of DNA into RNA using the four ribonucleoside triphosphates as substrates. The sequence is that of DNA-directed RNA polymerase subunit alpha from Shigella dysenteriae serotype 1 (strain Sd197).